A 515-amino-acid chain; its full sequence is Tabersonine 6,7-epoxidase isoform 2 (515 aa).

Residues 1-21 (MEFVVSPFAFLIFFFILLKMI) form a helical membrane-spanning segment. Residues Asn-173, Asn-259, and Asn-352 are each glycosylated (N-linked (GlcNAc...) asparagine). A heme-binding site is contributed by Cys-449.

Belongs to the cytochrome P450 family. Heme is required as a cofactor. Mainly expressed in aerial organs, including stems, leaves and flowers.

It localises to the endoplasmic reticulum membrane. It catalyses the reaction (-)-tabersonine + reduced [NADPH--hemoprotein reductase] + O2 = lochnericine + oxidized [NADPH--hemoprotein reductase] + H2O + H(+). It participates in alkaloid biosynthesis. Its function is as follows. Component of the monoterpenoid indole alkaloids (MIAs, e.g. echitovenine, tabersonine, lochnericine, 19-hydroxytabersonine and horhammericine) biosynthetic pathway; MIAs are used in cancer treatment and other medical applications. Cytochrome P450 catalyzing the conversion of tabersonine to lochnericine. The chain is Tabersonine 6,7-epoxidase isoform 2 from Catharanthus roseus (Madagascar periwinkle).